The chain runs to 437 residues: Protein farnesyltransferase subunit beta (437 aa).

PFTB repeat units follow at residues 123 to 164 (ATDV…CIIG), 174 to 215 (REKL…SLTN), 222 to 263 (FEGT…VILK), 270 to 312 (LKSL…PLLH), and 332 to 374 (QQAL…SIAQ). Residues 248–251 (HGGY) and 291–294 (RCNK) contribute to the (2E,6E)-farnesyl diphosphate site. The Zn(2+) site is built by Asp-297 and Cys-299. Residue 300–303 (YSFW) participates in (2E,6E)-farnesyl diphosphate binding. A Zn(2+)-binding site is contributed by His-362. A Phosphoserine modification is found at Ser-432. Thr-436 is modified (phosphothreonine).

The protein belongs to the protein prenyltransferase subunit beta family. Heterodimer of FNTA and FNTB. Zn(2+) serves as cofactor.

The catalysed reaction is L-cysteinyl-[protein] + (2E,6E)-farnesyl diphosphate = S-(2E,6E)-farnesyl-L-cysteinyl-[protein] + diphosphate. Functionally, essential subunit of the farnesyltransferase complex. Catalyzes the transfer of a farnesyl moiety from farnesyl diphosphate to a cysteine at the fourth position from the C-terminus of several proteins having the C-terminal sequence Cys-aliphatic-aliphatic-X. The chain is Protein farnesyltransferase subunit beta (Fntb) from Mus musculus (Mouse).